The sequence spans 445 residues: GTPase Der (445 aa).

EngA-type G domains follow at residues 3–167 and 180–353; these read PVIA…YAGE and IKIA…AAAM. Residues 9 to 16, 56 to 60, 119 to 122, 186 to 193, 233 to 237, and 298 to 301 each bind GTP; these read GRPNVGKS, DTGGF, NKAE, DTAGL, and NKWD. Positions 354-438 constitute a KH-like domain; sequence KKLPTPKLTR…PLRIEFRSST (85 aa).

Belongs to the TRAFAC class TrmE-Era-EngA-EngB-Septin-like GTPase superfamily. EngA (Der) GTPase family. In terms of assembly, associates with the 50S ribosomal subunit.

Functionally, GTPase that plays an essential role in the late steps of ribosome biogenesis. In Burkholderia pseudomallei (strain 1106a), this protein is GTPase Der.